The primary structure comprises 421 residues: Probable N-acetylgalactosaminyltransferase 8 (421 aa).

Residues 1–3 (MRR) are Cytoplasmic-facing. The chain crosses the membrane as a helical; Signal-anchor for type II membrane protein span at residues 4-24 (HVVLSIFVFAGIVFAAEEAEK). The Lumenal portion of the chain corresponds to 25 to 421 (LPKCEHVDPY…ELEPKVHDEL (397 aa)). N-linked (GlcNAc...) asparagine glycosylation is found at Asn-52 and Asn-58. Disulfide bonds link Cys-98–Cys-331 and Cys-322–Cys-399. Positions 106–219 (SYSTSVVVIH…ERWLEPLLQP (114 aa)) are catalytic subdomain A. Substrate is bound by residues Asp-147 and Arg-180. Residue Asp-203 participates in Mn(2+) binding. Ser-204 is a binding site for substrate. His-205 provides a ligand contact to Mn(2+). Residues 277–339 (PFNSPAMPGG…PCSRVGHVFR (63 aa)) are catalytic subdomain B. Trp-308 is a substrate binding site. His-336 contacts Mn(2+). The substrate site is built by Arg-339 and Tyr-344. Residues 418-421 (HDEL) carry the Prevents secretion from ER motif.

It belongs to the glycosyltransferase 2 family. GalNAc-T subfamily. The cofactor is Mn(2+).

Its subcellular location is the golgi apparatus membrane. Its pathway is protein modification; protein glycosylation. In terms of biological role, potential glycopeptide transferase involved in O-linked oligosaccharide biosynthesis. In contrast to other members of the family, it does not act as a peptide transferase that transfers GalNAc onto serine or threonine residue on peptides that have been tested. Some peptide transferase activity is however not excluded, considering that its appropriate peptide substrate may remain unidentified. This is Probable N-acetylgalactosaminyltransferase 8 (gly-8) from Caenorhabditis elegans.